The sequence spans 229 residues: Transmembrane emp24 domain-containing protein 5 (229 aa).

Residues 1–27 (MGDKIWLPFPVLLLAALPPVLLPGAAG) form the signal peptide. Residues 28–196 (FTPSLDSDFT…IQESNFDRVN (169 aa)) lie on the Lumenal side of the membrane. A GOLD domain is found at 45-126 (KECFYQPMPL…EKVIFFELIL (82 aa)). Residues 197–217 (FWSMVNLVVMVVVSAIQVYML) form a helical membrane-spanning segment. Residues 218 to 229 (KSLFEDKRKSRT) lie on the Cytoplasmic side of the membrane.

Belongs to the EMP24/GP25L family. Interacts with TMED9 and TMED10.

It localises to the endoplasmic reticulum membrane. It is found in the golgi apparatus. The protein resides in the cis-Golgi network membrane. The protein localises to the endoplasmic reticulum-Golgi intermediate compartment membrane. Its function is as follows. Potential role in vesicular protein trafficking, mainly in the early secretory pathway. Required for the maintenance of the Golgi apparatus; involved in protein exchange between Golgi stacks during assembly. Probably not required for COPI-vesicle-mediated retrograde transport. The polypeptide is Transmembrane emp24 domain-containing protein 5 (TMED5) (Homo sapiens (Human)).